A 324-amino-acid polypeptide reads, in one-letter code: Glycerol-3-phosphate dehydrogenase [NAD(P)+] (324 aa).

The NADPH site is built by tryptophan 15, arginine 35, and lysine 101. 2 residues coordinate sn-glycerol 3-phosphate: lysine 101 and glycine 129. An NADPH-binding site is contributed by alanine 133. Sn-glycerol 3-phosphate-binding residues include lysine 184, aspartate 237, serine 247, arginine 248, and asparagine 249. Residue lysine 184 is the Proton acceptor of the active site. Arginine 248 contributes to the NADPH binding site. Valine 272 and glutamate 274 together coordinate NADPH.

This sequence belongs to the NAD-dependent glycerol-3-phosphate dehydrogenase family.

It localises to the cytoplasm. The catalysed reaction is sn-glycerol 3-phosphate + NAD(+) = dihydroxyacetone phosphate + NADH + H(+). It catalyses the reaction sn-glycerol 3-phosphate + NADP(+) = dihydroxyacetone phosphate + NADPH + H(+). The protein operates within membrane lipid metabolism; glycerophospholipid metabolism. In terms of biological role, catalyzes the reduction of the glycolytic intermediate dihydroxyacetone phosphate (DHAP) to sn-glycerol 3-phosphate (G3P), the key precursor for phospholipid synthesis. The polypeptide is Glycerol-3-phosphate dehydrogenase [NAD(P)+] (Gluconobacter oxydans (strain 621H) (Gluconobacter suboxydans)).